The chain runs to 567 residues: uncharacterized protein (567 aa).

This sequence belongs to the protein kinase superfamily. ADCK protein kinase family.

This is an uncharacterized protein from Synechocystis sp. (strain ATCC 27184 / PCC 6803 / Kazusa).